We begin with the raw amino-acid sequence, 157 residues long: S-ribosylhomocysteine lyase (157 aa).

Fe cation contacts are provided by His54, His58, and Cys126.

This sequence belongs to the LuxS family. As to quaternary structure, homodimer. Fe cation is required as a cofactor.

The catalysed reaction is S-(5-deoxy-D-ribos-5-yl)-L-homocysteine = (S)-4,5-dihydroxypentane-2,3-dione + L-homocysteine. Involved in the synthesis of autoinducer 2 (AI-2) which is secreted by bacteria and is used to communicate both the cell density and the metabolic potential of the environment. The regulation of gene expression in response to changes in cell density is called quorum sensing. Catalyzes the transformation of S-ribosylhomocysteine (RHC) to homocysteine (HC) and 4,5-dihydroxy-2,3-pentadione (DPD). The chain is S-ribosylhomocysteine lyase from Bacillus pumilus (strain SAFR-032).